Here is a 523-residue protein sequence, read N- to C-terminus: Putative oxidoreductase TDA3 (523 aa).

Residues 157-172 (NSSLSSSGSSLKNDSA) are compositionally biased toward low complexity. Residues 157–189 (NSSLSSSGSSLKNDSASNEEEGSDIHVSSSVPS) are disordered. Ser-189, Ser-204, and Ser-306 each carry phosphoserine.

Belongs to the TDA3 family. As to quaternary structure, interacts with BTN2.

Its subcellular location is the cytoplasm. The protein localises to the late endosome. In terms of biological role, putative oxidoreductase that negatively regulates the retrieval of cargo from late endosomes to the Golgi. Regulates YIF1 and KEX2 localization. Required for fast DNA replication. In Saccharomyces cerevisiae (strain ATCC 204508 / S288c) (Baker's yeast), this protein is Putative oxidoreductase TDA3 (TDA3).